A 196-amino-acid chain; its full sequence is Dual-action ribosomal maturation protein DarP (196 aa).

It belongs to the DarP family.

The protein resides in the cytoplasm. Its function is as follows. Member of a network of 50S ribosomal subunit biogenesis factors which assembles along the 30S-50S interface, preventing incorrect 23S rRNA structures from forming. Promotes peptidyl transferase center (PTC) maturation. The sequence is that of Dual-action ribosomal maturation protein DarP from Stenotrophomonas maltophilia (strain R551-3).